Consider the following 471-residue polypeptide: Glutamate--tRNA ligase 1 (471 aa).

The 'HIGH' region signature appears at 15-25; it reads PSPTGYLHIGG. A 'KMSKS' region motif is present at residues 243–247; it reads KLSKR. Lys-246 is a binding site for ATP.

It belongs to the class-I aminoacyl-tRNA synthetase family. Glutamate--tRNA ligase type 1 subfamily. As to quaternary structure, monomer.

The protein resides in the cytoplasm. It catalyses the reaction tRNA(Glu) + L-glutamate + ATP = L-glutamyl-tRNA(Glu) + AMP + diphosphate. Its function is as follows. Catalyzes the attachment of glutamate to tRNA(Glu) in a two-step reaction: glutamate is first activated by ATP to form Glu-AMP and then transferred to the acceptor end of tRNA(Glu). This chain is Glutamate--tRNA ligase 1, found in Cereibacter sphaeroides (strain ATCC 17029 / ATH 2.4.9) (Rhodobacter sphaeroides).